A 384-amino-acid chain; its full sequence is Deoxyguanosinetriphosphate triphosphohydrolase-like protein (384 aa).

In terms of domain architecture, HD spans 62–198; that stretch reads RLTHSLEVST…AALADDISYI (137 aa).

This sequence belongs to the dGTPase family. Type 2 subfamily.

The polypeptide is Deoxyguanosinetriphosphate triphosphohydrolase-like protein (Rickettsia rickettsii (strain Iowa)).